We begin with the raw amino-acid sequence, 47 residues long: PhoP/PhoQ regulator MgrB (47 aa).

A helical transmembrane segment spans residues 6-26; it reads WVALVVVVLACLLLWAQVFNM.

Belongs to the MgrB family. As to quaternary structure, may form homooligomers. Probably interacts with the periplasmic domain of PhoQ.

It is found in the cell inner membrane. PhoP-regulated transcription is redox-sensitive, being activated when the periplasm becomes more reducing. MgrB acts between DsbA/DsbB and PhoP/PhoQ in this pathway. Represses PhoP/PhoQ signaling, possibly by binding to the periplasmic domain of PhoQ, altering its activity and that of downstream effector PhoP. In Escherichia coli O1:K1 / APEC, this protein is PhoP/PhoQ regulator MgrB.